A 285-amino-acid polypeptide reads, in one-letter code: 4-diphosphocytidyl-2-C-methyl-D-erythritol kinase (285 aa).

The active site involves lysine 12. Residue 95 to 105 (PMGGGVGGGSS) participates in ATP binding. Residue aspartate 137 is part of the active site.

The protein belongs to the GHMP kinase family. IspE subfamily.

It carries out the reaction 4-CDP-2-C-methyl-D-erythritol + ATP = 4-CDP-2-C-methyl-D-erythritol 2-phosphate + ADP + H(+). It functions in the pathway isoprenoid biosynthesis; isopentenyl diphosphate biosynthesis via DXP pathway; isopentenyl diphosphate from 1-deoxy-D-xylulose 5-phosphate: step 3/6. In terms of biological role, catalyzes the phosphorylation of the position 2 hydroxy group of 4-diphosphocytidyl-2C-methyl-D-erythritol. In Actinobacillus pleuropneumoniae serotype 5b (strain L20), this protein is 4-diphosphocytidyl-2-C-methyl-D-erythritol kinase.